A 314-amino-acid polypeptide reads, in one-letter code: MALEQLGLGVSAVDGGENSSAPSNDGGDDGVKTARLPRWTRQEILVLIQGKRVAENRVRRGRAAGMALGSGQMEPKWASVSSYCKRHGVNRGPVQCRKRWSNLAGDYKKIKEWESQIKEETESYWVMRNDVRREKKLPGFFDKEVYDIVDGGVIPPAVPVLSLGLAPASDEGLLSDLDRRESPEKLNSTPVAKSVTDVIDKEKQEACVADQGRVKEKQPEAANVEGGSTSQEERKRKRTSFGEKEEEEEEGETKKMQNQLIEILERNGQLLAAQLEVQNLNLKLDREQRKDHGDSLVAVLNKLADAVAKIADKM.

Residues 1–34 are disordered; sequence MALEQLGLGVSAVDGGENSSAPSNDGGDDGVKTA. The Myb-like domain maps to 38–104; the sequence is RWTRQEILVL…QCRKRWSNLA (67 aa). A Nuclear localization signal motif is present at residues 84–91; that stretch reads CKRHGVNR. The short motif at 161–165 is the EAR 1 element; it reads LSLGL. T189 is subject to Phosphothreonine; by MAPK4. Residues 207–255 are disordered; that stretch reads CVADQGRVKEKQPEAANVEGGSTSQEERKRKRTSFGEKEEEEEEGETKK. Positions 280–284 match the EAR 2 motif; it reads LNLKL.

As to quaternary structure, homodimer. Interacts directly with MPK4. Phosphorylated on Thr-189 by MPK4 in response to microbe-associated molecular patterns (MAMPs, e.g. flg22, elf18, chitin, and LPS). This phosphorylation enhances DNA-binding and thus negatively regulates immune gene expression.

The protein resides in the nucleus. Transcriptional repressor that binds DNA and plays a negative role in regulating microbe-associated molecular patterns-(MAMPs, e.g. flg22, elf18, chitin, and LPS) triggered immunity (PTI) by negatively regulating immune gene expression. This chain is Trihelix transcription factor ASR3, found in Arabidopsis thaliana (Mouse-ear cress).